Consider the following 292-residue polypeptide: Protease HtpX (292 aa).

A run of 2 helical transmembrane segments spans residues 5-25 (IFLF…VMSV) and 34-54 (SGLL…SLLL). Zn(2+) is bound at residue His140. Glu141 is an active-site residue. His144 contributes to the Zn(2+) binding site. 2 helical membrane-spanning segments follow: residues 155–175 (LLQG…GGII) and 193–213 (IIVF…AMWF). Glu218 serves as a coordination point for Zn(2+).

This sequence belongs to the peptidase M48B family. It depends on Zn(2+) as a cofactor.

The protein resides in the cell inner membrane. The protein is Protease HtpX of Xanthomonas oryzae pv. oryzae (strain PXO99A).